A 446-amino-acid chain; its full sequence is Chromosomal replication initiator protein DnaA (446 aa).

The interval Met1 to Glu72 is domain I, interacts with DnaA modulators. The interval Glu72–Asn109 is domain II. The tract at residues Met110–Ser326 is domain III, AAA+ region. Positions 154, 156, 157, and 158 each coordinate ATP. The interval Ser327–Arg446 is domain IV, binds dsDNA.

The protein belongs to the DnaA family. As to quaternary structure, oligomerizes as a right-handed, spiral filament on DNA at oriC.

The protein resides in the cytoplasm. Plays an essential role in the initiation and regulation of chromosomal replication. ATP-DnaA binds to the origin of replication (oriC) to initiate formation of the DNA replication initiation complex once per cell cycle. Binds the DnaA box (a 9 base pair repeat at the origin) and separates the double-stranded (ds)DNA. Forms a right-handed helical filament on oriC DNA; dsDNA binds to the exterior of the filament while single-stranded (ss)DNA is stabiized in the filament's interior. The ATP-DnaA-oriC complex binds and stabilizes one strand of the AT-rich DNA unwinding element (DUE), permitting loading of DNA polymerase. After initiation quickly degrades to an ADP-DnaA complex that is not apt for DNA replication. Binds acidic phospholipids. The sequence is that of Chromosomal replication initiator protein DnaA from Bacillus licheniformis (strain ATCC 14580 / DSM 13 / JCM 2505 / CCUG 7422 / NBRC 12200 / NCIMB 9375 / NCTC 10341 / NRRL NRS-1264 / Gibson 46).